Reading from the N-terminus, the 890-residue chain is Leucine-rich repeat receptor-like tyrosine-protein kinase PXC3 (890 aa).

A signal peptide spans 1–23 (MTFWCMSILLIVGFLSKSELCEA). Residues 24 to 534 (QLSDEATLVA…LRYNHRVSYR (511 aa)) are Extracellular-facing. Residues N46, N61, N78, and N108 are each glycosylated (N-linked (GlcNAc...) asparagine). LRR repeat units lie at residues 67–85 (MLDL…ISDL), 86–108 (RSLK…SFGN), 110–132 (SELE…EFGK), 133–157 (LRGL…LKVL), 159–181 (RLEE…VGNL), 182–205 (SSLR…LGLV), 206–229 (SELE…IFEK), 231–254 (KLKV…GICS), 256–276 (LSSI…TIGN), 278–300 (SGLT…EFSK), 301–325 (CSNL…LGQL), 326–349 (INLQ…FLGS), 350–373 (GNLN…LCSM), 375–397 (RLQY…IGNC), 399–421 (KLLQ…IGRM), 422–446 (RNLQ…LGKL), 447–469 (DKLV…LLKG), and 471–492 (MSLI…VFVP). 3 N-linked (GlcNAc...) asparagine glycosylation sites follow: N140, N171, and N180. 3 N-linked (GlcNAc...) asparagine glycosylation sites follow: N276, N289, and N303. N363 is a glycosylation site (N-linked (GlcNAc...) asparagine). N-linked (GlcNAc...) asparagine glycosylation occurs at N429. N-linked (GlcNAc...) asparagine glycosylation is found at N477 and N498. The chain crosses the membrane as a helical span at residues 535-555 (IVLAVIGSGVAVFVSVTVVVL). The Cytoplasmic segment spans residues 556 to 890 (LFMMREKQEK…EMLQEVKQIK (335 aa)). Positions 608–886 (MKESNKLSTG…KKVVEMLQEV (279 aa)) constitute a Protein kinase domain. Residues 614-622 (LSTGTFSSV) and K636 contribute to the ATP site. The active-site Proton acceptor is D735.

It belongs to the protein kinase superfamily. Tyr protein kinase family. Expressed in the vascular strands of cotyledons, the shoot apex, hypocotyls, roots, leaves, stems and flowers.

It localises to the cell membrane. It catalyses the reaction L-tyrosyl-[protein] + ATP = O-phospho-L-tyrosyl-[protein] + ADP + H(+). Its function is as follows. Leucine-rich repeat receptor-like protein kinase that may play a role in vascular tissues development. This is Leucine-rich repeat receptor-like tyrosine-protein kinase PXC3 from Arabidopsis thaliana (Mouse-ear cress).